Consider the following 731-residue polypeptide: Inclusion body clearance protein IML2 (731 aa).

Residues 1-26 (MFRVFGSFGSKGNQSSGEEQSTKTKQ) form a disordered region. A compositionally biased stretch (polar residues) spans 10-26 (SKGNQSSGEEQSTKTKQ). Serine 265, serine 268, and serine 378 each carry phosphoserine. Threonine 380 carries the phosphothreonine modification. 2 positions are modified to phosphoserine: serine 383 and serine 392.

Belongs to the IML2 family. In terms of assembly, interacts with lipid droplet proteins PET10 and PDR16.

Its subcellular location is the cytoplasm. It is found in the nucleus. Its function is as follows. Inclusion body (IB) resident protein that interacts strongly with lipid droplet (LD) proteins. Involved in LD-mediated IB clearing after protein folding stress, probably by enabling access to the IBs of an LD-stored soluble sterol derivative that acts as a chaperone in inclusion clearing. This is Inclusion body clearance protein IML2 from Saccharomyces cerevisiae (strain ATCC 204508 / S288c) (Baker's yeast).